The primary structure comprises 235 residues: Probable transcriptional regulatory protein Cj1172c (235 aa).

Belongs to the TACO1 family.

Its subcellular location is the cytoplasm. This is Probable transcriptional regulatory protein Cj1172c from Campylobacter jejuni subsp. jejuni serotype O:2 (strain ATCC 700819 / NCTC 11168).